A 405-amino-acid chain; its full sequence is Arginine biosynthesis bifunctional protein ArgJ (405 aa).

Thr-155, Lys-181, Thr-192, Glu-278, Asn-400, and Thr-405 together coordinate substrate. Thr-192 (nucleophile) is an active-site residue.

Belongs to the ArgJ family. As to quaternary structure, heterotetramer of two alpha and two beta chains.

The protein localises to the cytoplasm. It carries out the reaction N(2)-acetyl-L-ornithine + L-glutamate = N-acetyl-L-glutamate + L-ornithine. The catalysed reaction is L-glutamate + acetyl-CoA = N-acetyl-L-glutamate + CoA + H(+). Its pathway is amino-acid biosynthesis; L-arginine biosynthesis; L-ornithine and N-acetyl-L-glutamate from L-glutamate and N(2)-acetyl-L-ornithine (cyclic): step 1/1. The protein operates within amino-acid biosynthesis; L-arginine biosynthesis; N(2)-acetyl-L-ornithine from L-glutamate: step 1/4. Functionally, catalyzes two activities which are involved in the cyclic version of arginine biosynthesis: the synthesis of N-acetylglutamate from glutamate and acetyl-CoA as the acetyl donor, and of ornithine by transacetylation between N(2)-acetylornithine and glutamate. The sequence is that of Arginine biosynthesis bifunctional protein ArgJ from Dehalococcoides mccartyi (strain CBDB1).